The chain runs to 241 residues: Tubulin-like protein alpha-4B (241 aa).

Residues 1–10 (MRHQQTERQD) are compositionally biased toward basic and acidic residues. A disordered region spans residues 1–20 (MRHQQTERQDPSQPLSRQHG). A GTP-binding site is contributed by Asp-10. Asp-10 serves as a coordination point for Mg(2+). Polar residues predominate over residues 11–20 (PSQPLSRQHG). The GTP site is built by Ser-79, Gly-83, Thr-84, Thr-118, Asn-145, and Asn-167. Glu-193 is an active-site residue.

Belongs to the tubulin family. It depends on Mg(2+) as a cofactor. In terms of processing, some glutamate residues at the C-terminus are polyglutamylated, resulting in polyglutamate chains on the gamma-carboxyl group. Polyglutamylation plays a key role in microtubule severing by spastin (SPAST). SPAST preferentially recognizes and acts on microtubules decorated with short polyglutamate tails: severing activity by SPAST increases as the number of glutamates per tubulin rises from one to eight, but decreases beyond this glutamylation threshold. Glutamylation is also involved in cilia motility. Some glutamate residues at the C-terminus are monoglycylated but not polyglycylated due to the absence of functional TTLL10 in human. Monoglycylation is mainly limited to tubulin incorporated into cilia and flagella axonemes, which is required for their stability and maintenance. Flagella glycylation controls sperm motility. Both polyglutamylation and monoglycylation can coexist on the same protein on adjacent residues, and lowering glycylation levels increases polyglutamylation, and reciprocally.

The protein resides in the cytoplasm. Its subcellular location is the cytoskeleton. The enzyme catalyses GTP + H2O = GDP + phosphate + H(+). Functionally, tubulin is the major constituent of microtubules, a cylinder consisting of laterally associated linear protofilaments composed ofalpha- and beta-tubulin heterodimers. This is Tubulin-like protein alpha-4B (TUBA4B) from Homo sapiens (Human).